Reading from the N-terminus, the 366-residue chain is Phospho-N-acetylmuramoyl-pentapeptide-transferase (366 aa).

10 consecutive transmembrane segments (helical) span residues alanine 27–leucine 47, threonine 71–alanine 91, leucine 93–phenylalanine 113, phenylalanine 138–alanine 158, leucine 174–glycine 194, glycine 205–alanine 225, leucine 245–proline 265, alanine 268–valine 288, isoleucine 297–phenylalanine 317, and glutamine 343–leucine 363.

Belongs to the glycosyltransferase 4 family. MraY subfamily. Mg(2+) is required as a cofactor.

It localises to the cell inner membrane. The catalysed reaction is UDP-N-acetyl-alpha-D-muramoyl-L-alanyl-gamma-D-glutamyl-meso-2,6-diaminopimeloyl-D-alanyl-D-alanine + di-trans,octa-cis-undecaprenyl phosphate = di-trans,octa-cis-undecaprenyl diphospho-N-acetyl-alpha-D-muramoyl-L-alanyl-D-glutamyl-meso-2,6-diaminopimeloyl-D-alanyl-D-alanine + UMP. Its pathway is cell wall biogenesis; peptidoglycan biosynthesis. Catalyzes the initial step of the lipid cycle reactions in the biosynthesis of the cell wall peptidoglycan: transfers peptidoglycan precursor phospho-MurNAc-pentapeptide from UDP-MurNAc-pentapeptide onto the lipid carrier undecaprenyl phosphate, yielding undecaprenyl-pyrophosphoryl-MurNAc-pentapeptide, known as lipid I. This is Phospho-N-acetylmuramoyl-pentapeptide-transferase from Rhizobium meliloti (strain 1021) (Ensifer meliloti).